Reading from the N-terminus, the 285-residue chain is MESGDLKIFQAVAREGSITKAAQMLNYVQSNVTARVHNLEEDLNIRLFHRTNRGMKLTAAGENLLQYADQVLSLLDQAEKSTRMSRQPKGPLRIGSLETMAVTHLPEHAASFLRRFPEVDLSVNTADTHHLIQQVLDHKVDGAFVYGPVEHAAVRQLHVSHDELVLISSREGTAEDMLQQPMLFFGAGCSHRDRVKRLLEEAGIHNQKIIEFGTLEAIIKGVSAGMGTALLPKSAVDGSEHRTNVWIHQLPPSYQDLEIVFIYRKDFFITSAFQTFLDEINEMKR.

In terms of domain architecture, HTH lysR-type spans 1–58; sequence MESGDLKIFQAVAREGSITKAAQMLNYVQSNVTARVHNLEEDLNIRLFHRTNRGMKLT. The segment at residues 18 to 37 is a DNA-binding region (H-T-H motif); it reads ITKAAQMLNYVQSNVTARVH.

The protein belongs to the LysR transcriptional regulatory family.

Its subcellular location is the cytoplasm. Its function is as follows. Regulates expression of the cell division protein ftsW, and is essential for cell viability during stationary phase. The polypeptide is HTH-type transcriptional regulator YofA (yofA) (Bacillus subtilis (strain 168)).